A 570-amino-acid chain; its full sequence is Proline--tRNA ligase (570 aa).

Belongs to the class-II aminoacyl-tRNA synthetase family. ProS type 1 subfamily. In terms of assembly, homodimer.

It is found in the cytoplasm. The catalysed reaction is tRNA(Pro) + L-proline + ATP = L-prolyl-tRNA(Pro) + AMP + diphosphate. Its function is as follows. Catalyzes the attachment of proline to tRNA(Pro) in a two-step reaction: proline is first activated by ATP to form Pro-AMP and then transferred to the acceptor end of tRNA(Pro). As ProRS can inadvertently accommodate and process non-cognate amino acids such as alanine and cysteine, to avoid such errors it has two additional distinct editing activities against alanine. One activity is designated as 'pretransfer' editing and involves the tRNA(Pro)-independent hydrolysis of activated Ala-AMP. The other activity is designated 'posttransfer' editing and involves deacylation of mischarged Ala-tRNA(Pro). The misacylated Cys-tRNA(Pro) is not edited by ProRS. The polypeptide is Proline--tRNA ligase (Shewanella sp. (strain MR-7)).